The following is a 91-amino-acid chain: Cell division topological specificity factor (91 aa).

Belongs to the MinE family.

Functionally, prevents the cell division inhibition by proteins MinC and MinD at internal division sites while permitting inhibition at polar sites. This ensures cell division at the proper site by restricting the formation of a division septum at the midpoint of the long axis of the cell. This chain is Cell division topological specificity factor, found in Chloroflexus aggregans (strain MD-66 / DSM 9485).